A 305-amino-acid polypeptide reads, in one-letter code: tRNA dimethylallyltransferase (305 aa).

11 to 18 (GPTAVGKT) lines the ATP pocket. 13–18 (TAVGKT) lines the substrate pocket. An interaction with substrate tRNA region spans residues 36–39 (DSMQ).

This sequence belongs to the IPP transferase family. Monomer. The cofactor is Mg(2+).

The enzyme catalyses adenosine(37) in tRNA + dimethylallyl diphosphate = N(6)-dimethylallyladenosine(37) in tRNA + diphosphate. Functionally, catalyzes the transfer of a dimethylallyl group onto the adenine at position 37 in tRNAs that read codons beginning with uridine, leading to the formation of N6-(dimethylallyl)adenosine (i(6)A). This chain is tRNA dimethylallyltransferase, found in Listeria monocytogenes serovar 1/2a (strain ATCC BAA-679 / EGD-e).